The sequence spans 498 residues: Glycerol kinase (498 aa).

Thr12 serves as a coordination point for ADP. ATP is bound by residues Thr12, Thr13, and Ser14. Thr12 contributes to the sn-glycerol 3-phosphate binding site. Residue Arg16 participates in ADP binding. Residues Arg82, Glu83, and Tyr134 each coordinate sn-glycerol 3-phosphate. Positions 82, 83, and 134 each coordinate glycerol. His230 is modified (phosphohistidine; by HPr). Asp244 is a binding site for sn-glycerol 3-phosphate. Residues Asp244 and Gln245 each coordinate glycerol. Positions 266 and 309 each coordinate ADP. ATP contacts are provided by Thr266, Gly309, Gln313, and Gly410. ADP is bound by residues Gly410 and Asn414.

This sequence belongs to the FGGY kinase family. As to quaternary structure, homotetramer and homodimer (in equilibrium). Post-translationally, the phosphoenolpyruvate-dependent sugar phosphotransferase system (PTS), including enzyme I, and histidine-containing protein (HPr) are required for the phosphorylation, which leads to the activation of the enzyme.

It catalyses the reaction glycerol + ATP = sn-glycerol 3-phosphate + ADP + H(+). Its pathway is polyol metabolism; glycerol degradation via glycerol kinase pathway; sn-glycerol 3-phosphate from glycerol: step 1/1. Its activity is regulated as follows. Activated by phosphorylation and inhibited by fructose 1,6-bisphosphate (FBP). In terms of biological role, key enzyme in the regulation of glycerol uptake and metabolism. Catalyzes the phosphorylation of glycerol to yield sn-glycerol 3-phosphate. In Staphylococcus aureus (strain bovine RF122 / ET3-1), this protein is Glycerol kinase.